The chain runs to 360 residues: Phospho-N-acetylmuramoyl-pentapeptide-transferase (360 aa).

The next 10 membrane-spanning stretches (helical) occupy residues 26-46 (TILG…AVIQ), 70-90 (GTPT…TLLW), 97-117 (YVWV…VDDY), 132-152 (AKFF…FSTA), 168-188 (VVLP…VGSS), 199-219 (GLAI…AYAT), 236-256 (AGEV…FLWF), 263-283 (VFMG…LAVV), 288-308 (LVLL…MLQV), and 338-358 (VIVR…AMLK).

This sequence belongs to the glycosyltransferase 4 family. MraY subfamily. Requires Mg(2+) as cofactor.

It is found in the cell inner membrane. It carries out the reaction UDP-N-acetyl-alpha-D-muramoyl-L-alanyl-gamma-D-glutamyl-meso-2,6-diaminopimeloyl-D-alanyl-D-alanine + di-trans,octa-cis-undecaprenyl phosphate = di-trans,octa-cis-undecaprenyl diphospho-N-acetyl-alpha-D-muramoyl-L-alanyl-D-glutamyl-meso-2,6-diaminopimeloyl-D-alanyl-D-alanine + UMP. It participates in cell wall biogenesis; peptidoglycan biosynthesis. Catalyzes the initial step of the lipid cycle reactions in the biosynthesis of the cell wall peptidoglycan: transfers peptidoglycan precursor phospho-MurNAc-pentapeptide from UDP-MurNAc-pentapeptide onto the lipid carrier undecaprenyl phosphate, yielding undecaprenyl-pyrophosphoryl-MurNAc-pentapeptide, known as lipid I. The sequence is that of Phospho-N-acetylmuramoyl-pentapeptide-transferase from Alkalilimnicola ehrlichii (strain ATCC BAA-1101 / DSM 17681 / MLHE-1).